The sequence spans 243 residues: Large ribosomal subunit protein uL2 (243 aa).

Residues 1 to 12 (MGRRIQGQRRGR) are compositionally biased toward basic residues. 2 disordered regions span residues 1-38 (MGRR…SDDT) and 198-243 (VDHP…GSSE). 2 stretches are compositionally biased toward basic and acidic residues: residues 24-34 (YKAELSHKQSE) and 221-231 (PPGRKVGDIAS).

This sequence belongs to the universal ribosomal protein uL2 family. In terms of assembly, part of the 50S ribosomal subunit. Forms a bridge to the 30S subunit in the 70S ribosome.

Its function is as follows. One of the primary rRNA binding proteins. Required for association of the 30S and 50S subunits to form the 70S ribosome, for tRNA binding and peptide bond formation. It has been suggested to have peptidyltransferase activity; this is somewhat controversial. Makes several contacts with the 16S rRNA in the 70S ribosome. The chain is Large ribosomal subunit protein uL2 from Haloquadratum walsbyi (strain DSM 16790 / HBSQ001).